Consider the following 469-residue polypeptide: Ufm1-specific protease 2 (469 aa).

At methionine 1 the chain carries N-acetylmethionine. Active-site residues include cysteine 302, aspartate 426, and histidine 428.

Belongs to the peptidase C78 family. Expressed in brain.

The protein resides in the endoplasmic reticulum. Its subcellular location is the cytoplasm. It is found in the nucleus. Its function is as follows. Thiol-dependent isopeptidase that specifically cleaves UFM1, a ubiquitin-like modifier protein, from conjugated proteins, such as CD274/PD-L1, CYB5R3, DDRGK1, MRE11, RPL26/uL24, TRIP4 and RPL26/uL24. While it is also able to mediate the processing of UFM1 precursors, a prerequisite for conjugation reactions, UFSP2 mainly acts as a protein deUFMylase that mediates deconjugation of UFM1 from target proteins. Mediates deUFMylation of RPL26/uL24, a critical step to release the UFM1 ribosome E3 ligase (UREL) complex during the recycling of 60S ribosome subunits from the endoplasmic reticulum. Catalyzes deUFMylation of TRIP4, regulating intracellular nuclear receptors transactivation and thereby regulate cell proliferation and differentiation. This is Ufm1-specific protease 2 from Homo sapiens (Human).